Here is a 459-residue protein sequence, read N- to C-terminus: Phosphomethylpyrimidine synthase (459 aa).

Residues Asn81, Met110, Tyr140, His176, 196–198, 237–240, and Glu276 contribute to the substrate site; these read SRG and DSLR. His280 serves as a coordination point for Zn(2+). Position 303 (Tyr303) interacts with substrate. A Zn(2+)-binding site is contributed by His344. The [4Fe-4S] cluster site is built by Cys424, Cys427, and Cys432.

Belongs to the ThiC family. [4Fe-4S] cluster is required as a cofactor.

It catalyses the reaction 5-amino-1-(5-phospho-beta-D-ribosyl)imidazole + S-adenosyl-L-methionine = 4-amino-2-methyl-5-(phosphooxymethyl)pyrimidine + CO + 5'-deoxyadenosine + formate + L-methionine + 3 H(+). Its pathway is cofactor biosynthesis; thiamine diphosphate biosynthesis. Functionally, catalyzes the synthesis of the hydroxymethylpyrimidine phosphate (HMP-P) moiety of thiamine from aminoimidazole ribotide (AIR) in a radical S-adenosyl-L-methionine (SAM)-dependent reaction. This chain is Phosphomethylpyrimidine synthase, found in Gloeobacter violaceus (strain ATCC 29082 / PCC 7421).